Consider the following 760-residue polypeptide: Armadillo-like helical domain-containing protein 4 (760 aa).

An N-terminal signal peptide occupies residues 1 to 27; that stretch reads MSRPIVLHICLAFCSLLLLNFAAQCLA. Topologically, residues 28-700 are extracellular; the sequence is FPNLERREIV…KDKAGYMSGM (673 aa). Disordered regions lie at residues 49-69, 117-143, 216-243, 373-392, 474-495, and 536-652; these read LNTD…SGDP, GEEV…LTNP, RTEK…TEPS, HGGE…PMGD, TRGE…DAPR, and NEEL…SQEP. N-linked (GlcNAc...) asparagine glycosylation is present at N56. Positions 216-228 are enriched in basic and acidic residues; it reads RTEKFEANPEHKT. The segment covering 380 to 390 has biased composition (polar residues); it reads DQSSVTPTSPM. The segment covering 474-484 has biased composition (basic and acidic residues); it reads TRGEDETKGGR. A compositionally biased stretch (acidic residues) spans 594–635; sequence LESEEGEDDEDEEDEEEEDEEEEDEEEDEEDKDADSLDEALG. A helical transmembrane segment spans residues 701-721; sequence LVPVGVGIAGALFILGALYSI. Over 722–760 the chain is Cytoplasmic; it reads KVMNRRRRNGFKRHKRKQREFNSMQDRVMLLADSSEDEF. Phosphoserine occurs at positions 755 and 756.

Interacts with IL6ST; this interaction prevents IL6ST protein homodimerization and bridges ARMH4 with IL6R and STAT3 and therefore inhibits phosphorylation of STAT3 at 'Tyr-705'. Interacts (via cytoplasmic tail) with RICTOR; this interaction bridges ARMH4 to the mTORC2 complex and inhibits the mTORC2 kinase activity.

The protein localises to the membrane. Its function is as follows. May modulate immune response and may play a role in inflammation. Down-modulates STAT3 signaling throught direct interaction with IL6ST, resulting in the inhibition of phosphorylation of STAT3 at Tyr-705. May negatively regulates AKT signaling by modulating the activity of mTORC2 complex through RICTOR interaction. This chain is Armadillo-like helical domain-containing protein 4, found in Bos taurus (Bovine).